The chain runs to 400 residues: Carnosine N-methyltransferase (400 aa).

Residues 1–51 (MQRRQRAPPASQPAQDGGRSEDVEVQFSAGRLGSAAPAGPPARGTAEDEER) are disordered. Low complexity predominate over residues 28–44 (SAGRLGSAAPAGPPARG). 7 residues coordinate S-adenosyl-L-methionine: glutamine 155, arginine 158, glycine 199, glutamate 220, aspartate 286, phenylalanine 287, and cysteine 303. Aspartate 307 lines the carnosine pocket. Residue tyrosine 315 coordinates S-adenosyl-L-methionine. Carnosine is bound by residues histidine 338 and tyrosine 389.

It belongs to the carnosine N-methyltransferase family. As to quaternary structure, homodimer. Each monomer accommodates one molecule of carnosine in its active pocket, precisely anchoring the histidine imidazole ring such that only N1 is exposed and deprotonated for methylation.

It is found in the cytoplasm. Its subcellular location is the cytosol. The protein resides in the nucleus. The catalysed reaction is carnosine + S-adenosyl-L-methionine = anserine + S-adenosyl-L-homocysteine + H(+). Its function is as follows. N-methyltransferase that catalyzes the formation of anserine (beta-alanyl-N(Pi)-methyl-L-histidine) from carnosine. Anserine, a methylated derivative of carnosine (beta-alanyl-L-histidine), is an abundant constituent of vertebrate skeletal muscles. Also methylates other L-histidine-containing di- and tripeptides such as Gly-Gly-His, Gly-His and homocarnosine (GABA-His). The polypeptide is Carnosine N-methyltransferase (Mus musculus (Mouse)).